An 801-amino-acid polypeptide reads, in one-letter code: PR domain zinc finger protein 4 (801 aa).

One can recognise an SET domain in the interval 412 to 529; the sequence is KQLVLRQSIV…PENELLFYYS (118 aa). A C2H2-type 1; atypical zinc finger spans residues 545 to 566; the sequence is HLCNCGKECNSYTEFKAHLTSH. 4 C2H2-type zinc fingers span residues 618–640, 646–668, 674–696, and 702–724; these read HKCD…LKIH, YRCT…MVIH, LKCD…VLIH, and IKCP…LNSH. The segment at 730-752 adopts a C2H2-type 6; atypical zinc-finger fold; sequence YVCEKCTKAYLTKYHLTRHLKTC. Residues 751 to 782 form a disordered region; sequence TCKGPTSSSSAPEEEEEDDSEEEDLADSVGTE. Residues 762 to 776 show a composition bias toward acidic residues; the sequence is PEEEEEDDSEEEDLA.

It belongs to the class V-like SAM-binding methyltransferase superfamily.

The protein resides in the nucleus. Functionally, may function as a transcription factor involved in cell differentiation. This chain is PR domain zinc finger protein 4 (PRDM4), found in Pongo abelii (Sumatran orangutan).